We begin with the raw amino-acid sequence, 158 residues long: 3-dehydroquinate dehydratase (158 aa).

Tyr24 (proton acceptor) is an active-site residue. Substrate is bound by residues Asn75, His81, and Asp88. The active-site Proton donor is His101. Substrate-binding positions include 102-103 and Arg112; that span reads LS.

The protein belongs to the type-II 3-dehydroquinase family. In terms of assembly, homododecamer.

It carries out the reaction 3-dehydroquinate = 3-dehydroshikimate + H2O. The protein operates within metabolic intermediate biosynthesis; chorismate biosynthesis; chorismate from D-erythrose 4-phosphate and phosphoenolpyruvate: step 3/7. Its function is as follows. Catalyzes a trans-dehydration via an enolate intermediate. The chain is 3-dehydroquinate dehydratase from Bartonella bacilliformis (strain ATCC 35685 / KC583 / Herrer 020/F12,63).